Here is a 275-residue protein sequence, read N- to C-terminus: NH(3)-dependent NAD(+) synthetase (275 aa).

46–53 (GISGGQDS) provides a ligand contact to ATP. Aspartate 52 lines the Mg(2+) pocket. Residue arginine 140 participates in deamido-NAD(+) binding. Threonine 160 contacts ATP. Position 165 (glutamate 165) interacts with Mg(2+). Lysine 173 and aspartate 180 together coordinate deamido-NAD(+). Lysine 189 and threonine 211 together coordinate ATP. 260-261 (HK) is a deamido-NAD(+) binding site.

This sequence belongs to the NAD synthetase family. As to quaternary structure, homodimer.

The enzyme catalyses deamido-NAD(+) + NH4(+) + ATP = AMP + diphosphate + NAD(+) + H(+). The protein operates within cofactor biosynthesis; NAD(+) biosynthesis; NAD(+) from deamido-NAD(+) (ammonia route): step 1/1. In terms of biological role, catalyzes the ATP-dependent amidation of deamido-NAD to form NAD. Uses ammonia as a nitrogen source. The protein is NH(3)-dependent NAD(+) synthetase of Salmonella paratyphi A (strain ATCC 9150 / SARB42).